Consider the following 714-residue polypeptide: BBSome complex member bbs-2 (714 aa).

Coiled-coil stretches lie at residues 332 to 361 and 597 to 627; these read IREF…VEKD and MTEV…DSIA.

As to quaternary structure, part of BBSome complex, that contains at least bbs-1, bbs-2, bbs-4, bbs-5, osm-12, bbs-8/ttc-8 and bbs-9. Expressed in ciliated cells including amphid and both inner and outer labial neurons of the head and in both phasmid neurons PHA and PHB in the tail at larval stages L1 and L2.

The protein resides in the cell projection. Its subcellular location is the cilium. The protein localises to the cytoplasm. It localises to the cytoskeleton. It is found in the cilium basal body. The protein resides in the cilium axoneme. Component of the BBSome complex. The BBSome complex is thought to function as a coat complex required for sorting of specific membrane proteins to the primary cilia. The BBSome complex is required for ciliogenesis but is dispensable for centriolar satellite function. Required for proper BBSome complex assembly and its ciliary localization. Required for cilia biogenesis and both the assembly and movement of intraflagellar transport proteins along the ciliary axoneme. The sequence is that of BBSome complex member bbs-2 from Caenorhabditis elegans.